The following is a 524-amino-acid chain: MAPTIQTQAQREDGHRSSSHRTVPERSGVVCRVKYCNTLPDIPFDPKFITYPFDQNRFVQYKATSLEKQHKHDLLTEPDLGVTIDLINPDTYRIDPNVTLDFADEKLLEEEIQAPSSSKRSQQHAKVVPWMRKTEYISTEFNRYGVSNEKPEVKIGVSVKQQFTEEDIYKDRDSQISAIEKTFDDAQKDISQHYSKPRVTPVEVMPVFPDFKMWINPCAQVIFDSDPAPKDASGTAALDMMSQAMIRGMMDEEGNQFVAYFLPGEDTMRKRKRDQEEGLDYMPEDIYDYKIAREYNWNVKNKASKGYEENYFFIFREGDGVYYNELETRVRLSKRRVKAGVQSGTNALLVVKHRDMHEKELEAQEARRAQLENHEPEEEEEIEVDRDTQGSDAEEGEKGSGSEKEGSGAEQSGSESEREGAEEEEKEDEQEKESSEDDRAARDKEEIFGSDDDDDDDDSDEDGHNESGQDGEDSGSDEEEEKGQGRRSRSASSSPFGSDRSQQENEDQSASDQGSGSSDGSDSD.

Disordered stretches follow at residues 1–23 (MAPT…HRTV) and 359–524 (KELE…SDSD). Residues 351-384 (VKHRDMHEKELEAQEARRAQLENHEPEEEEEIEV) adopt a coiled-coil conformation. Residues 359 to 374 (KELEAQEARRAQLENH) are compositionally biased toward basic and acidic residues. Over residues 375 to 384 (EPEEEEEIEV) the composition is skewed to acidic residues. The segment covering 396 to 407 (GEKGSGSEKEGS) has biased composition (basic and acidic residues). The stretch at 412 to 442 (SGSESEREGAEEEEKEDEQEKESSEDDRAAR) forms a coiled coil. The span at 420-436 (GAEEEEKEDEQEKESSE) shows a compositional bias: acidic residues. Residues 437-447 (DDRAARDKEEI) show a composition bias toward basic and acidic residues. Acidic residues-rich tracts occupy residues 448-461 (FGSD…DSDE) and 468-481 (GQDG…EEEE). Low complexity-rich tracts occupy residues 490–500 (SASSSPFGSDR) and 510–524 (ASDQ…SDSD).

It belongs to the PAF1 family. In terms of assembly, component of the PAF1 complex, which at least consists of cdc73, paf1, leo1, ctr9 and rtf1. The PAF1 complex interacts with PHF5A.

It is found in the nucleus. Component of the PAF1 complex (PAF1C) which has multiple functions during transcription by RNA polymerase II. PAF1C associates with RNA polymerase II, is involved in transcriptional elongation and in histone modifications including methylation on histone H3 'Lys-4' (H3K4me3). This chain is RNA polymerase II-associated factor 1 homolog (paf1), found in Xenopus laevis (African clawed frog).